Consider the following 466-residue polypeptide: Asparagine--tRNA ligase (466 aa).

The protein belongs to the class-II aminoacyl-tRNA synthetase family. As to quaternary structure, homodimer.

The protein localises to the cytoplasm. It catalyses the reaction tRNA(Asn) + L-asparagine + ATP = L-asparaginyl-tRNA(Asn) + AMP + diphosphate + H(+). The protein is Asparagine--tRNA ligase of Salmonella paratyphi A (strain ATCC 9150 / SARB42).